The following is a 476-amino-acid chain: MAKFFLTAAFAAAALAAPVVEERQNCAPTWGQCGGIGFNGPTCCQSGSTCVKQNDWYSQCLPGSQVTTTSTTSTSSSSTTSRATSTTRTGGVTSITTAPTRTVTIPGGATTTASYNGNPFEGVQLWANNYYRSEVHTLAIPQITDPALRAAASAVAEVPSFQWLDRNVTVDTLLVETLSEIRAANQAGANPPYAAQIVVYDLPDRDCAAAASNGEWAIANNGANNYKGYINRIREILISFSDVRTILVIEPDSLANMVTNMNVAKCSGAASTYRELTIYALKQLDLPHVAMYMDAGHAGWLGWPANIQPAAELFAKIYEDAGKPRAVRGLATNVANYNAWSISSPPPYTSPNPNYDEKHYIEAFRPLLEARGFPAQFIVDQGRSGKQPTGQKEWGHWCNAIGTGFGMRPTANTGHQYVDAFVWVKPGGECDGTSDTTAARYDYHCGLEDALKPAPEAGQWFQAYFEQLLRNANPPF.

An N-terminal signal peptide occupies residues 1-16 (MAKFFLTAAFAAAALA). 2 cysteine pairs are disulfide-bonded: Cys-33–Cys-50 and Cys-44–Cys-60. One can recognise a CBM1 domain in the interval 33 to 60 (CGGIGFNGPTCCQSGSTCVKQNDWYSQC). The tract at residues 67-94 (TTTSTTSTSSSSTTSRATSTTRTGGVTS) is disordered. A glycan (O-linked (Man...) threonine) is linked at Thr-144. The O-linked (Man...) serine glycan is linked to Ser-153. Substrate contacts are provided by Trp-163 and Asp-165. An N-linked (GlcNAc...) asparagine glycan is attached at Asn-167. The segment at 200–222 (YDLPDRDCAAAASNGEWAIANNG) is substrate binding loop 1. The Proton donor role is filled by Asp-252. The substrate site is built by His-297, Trp-300, Asn-336, Trp-397, Lys-425, and Glu-429. Residues 423 to 461 (WVKPGGECDGTSDTTAARYDYHCGLEDALKPAPEAGQWF) are substrate binding loop 2. The Proton acceptor role is filled by Asp-431.

This sequence belongs to the glycosyl hydrolase 6 (cellulase A) family. Monomer.

The catalysed reaction is Hydrolysis of (1-&gt;4)-beta-D-glucosidic linkages in cellulose and cellotetraose, releasing cellobiose from the non-reducing ends of the chains.. Functionally, plays a central role in the recycling of plant biomass. The biological conversion of cellulose to glucose generally requires three types of hydrolytic enzymes: (1) Endoglucanases which cut internal beta-1,4-glucosidic bonds; (2) Exocellobiohydrolases that cut the disaccharide cellobiose from the non-reducing end of the cellulose polymer chain; (3) Beta-1,4-glucosidases which hydrolyze the cellobiose and other short cello-oligosaccharides to glucose. The protein is Exoglucanase-6A of Humicola insolens (Soft-rot fungus).